The following is a 1019-amino-acid chain: Pleckstrin homology domain-containing family M member 2 (1019 aa).

Methionine 1 is subject to N-acetylmethionine. Residues 1–310 (MEPGEVKDRI…LDPPDACTEL (310 aa)) form an interaction with KIF5B region. In terms of domain architecture, RUN spans 36-158 (RNHDKVLQRL…IRFELDLDAP (123 aa)). Disordered stretches follow at residues 230 to 458 (SVPS…SEGL), 471 to 525 (SPST…REAQ), and 557 to 581 (QPSPCLSSAEDSGVDEGQGSPSEMV). Polar residues-rich tracts occupy residues 243–272 (DTVSGPRSTASDLTSSKASTRSPTQRQNPF) and 279–291 (TVSSSDTTPVHTT). The span at 315–327 (VTKKKKIGKKKKS) shows a compositional bias: basic residues. The segment covering 417–427 (LNGQLDPSTWC) has biased composition (polar residues). The residue at position 441 (serine 441) is a Phosphoserine. Basic and acidic residues predominate over residues 516–525 (PLEDTTREAQ). Residues 762–885 (PCHCSPPEGT…VIPQGVAPSP (124 aa)) are interaction with sifA. In terms of domain architecture, PH spans 771–873 (TITKEGMLHY…WMQHLCQAVS (103 aa)).

In terms of assembly, interacts with KLC2 (via TPR repeats). Interacts with KIF5B. Interacts with BORCS5. Interacts (via RUN domain) with ARL8B (GTP-bound form); PLEKHM1 and PLEKHM2 compete for interaction with ARL8B. Interacts with ARL8A. As to quaternary structure, (Microbial infection) Interacts with the S.typhimurium sifA protein; required for S.typhimurium infection.

The protein localises to the cytoplasm. Its subcellular location is the lysosome membrane. Functionally, plays a role in lysosomes movement and localization at the cell periphery acting as an effector of ARL8B. Required for ARL8B to exert its effects on lysosome location, recruits kinesin-1 to lysosomes and hence direct their movement toward microtubule plus ends. Binding to ARL8B provides a link from lysosomal membranes to plus-end-directed motility. Critical factor involved in NK cell-mediated cytotoxicity. Drives the polarization of cytolytic granules and microtubule-organizing centers (MTOCs) toward the immune synapse between effector NK lymphocytes and target cells. Required for maintenance of the Golgi apparatus organization. May play a role in membrane tubulation. This is Pleckstrin homology domain-containing family M member 2 from Homo sapiens (Human).